A 473-amino-acid chain; its full sequence is LKKRKVNILNHPGEHAGSNDANARRKYGVRGNFRDSDGELIALKNYMDAQYFGEIGIGTPPQKFTVIFDTGSSNLWVPSSKCYFSVACLFHSKYRSTDSTTYKKNGKSAAIQYGTGSISGFFSQDSVKLGDLLVKEQDFIEATKEPGITFLAAKFDGILGLGFQEISVGDAVPVWYTMLNQGLVQEPVFSFWLNRNADEQEGGELVFGGVDPNHFKGEHTYVPVTQKGYWQFEMGDVLIGDKTTGFCASGCAAIADSGTSLLAGTTTIVTQINQAIGAAGVMSQQCKSLVDQYGKSMIEMLLSEEQPEKICSQMKLCSFDGSHDTSMIIESVVDKSKGKSSGLPMRCVPCARWVVWMQNQIRQNETEENIINYVDKLCERLPSPMGESAVDCSSLSSMPNIAFTVGGKTFNLSPEQYVLKVGEGATAQCISGFTAMDVAPPHGPLWILGDVFMGQYHTVFDYGNLRVGFAEAA.

The propeptide at 1 to 33 (LKKRKVNILNHPGEHAGSNDANARRKYGVRGNF) is activation peptide. The Peptidase A1 domain occupies 51-470 (YFGEIGIGTP…DYGNLRVGFA (420 aa)). Residue D69 is part of the active site. 2 cysteine pairs are disulfide-bonded: C82/C88 and C247/C251. Residue D256 is part of the active site. One can recognise a Saposin B-type domain in the interval 281–384 (VMSQQCKSLV…DKLCERLPSP (104 aa)). Cystine bridges form between C286-C378, C311-C350, C317-C347, and C392-C429. N-linked (GlcNAc...) asparagine glycosylation is present at N364.

The protein belongs to the peptidase A1 family. Mostly present in the violet parts of styles and corollas of mature flowers.

The polypeptide is Cyprosin (CYPRO1) (Cynara cardunculus (Cardoon)).